A 207-amino-acid chain; its full sequence is MMQDVSSSPVSPADDSLSNSEEEPDRQQPPSGKRGGRKRRSSRRSAGGGAGPGGAAGGGVGGGDEPGSPAQGKRGKKSAGCGGGGSAGGGGGGGGGGSSSGGGSPQSYEELQTQRVMANVRERQRTQSLNEAFAALRKIIPTLPSDKLSKIQTLKLAARYIDFLYQVLQSDELDSKMASCSYVAHERLSYAFSVWRMEGAWSMSASH.

Positions 1–18 are enriched in low complexity; the sequence is MMQDVSSSPVSPADDSLS. The disordered stretch occupies residues 1–110; that stretch reads MMQDVSSSPV…GGGSPQSYEE (110 aa). Residues 34–43 show a composition bias toward basic residues; sequence RGGRKRRSSR. Composition is skewed to gly residues over residues 46-65 and 80-104; these read AGGG…GGDE and GCGG…GGGS. The bHLH domain maps to 113–164; it reads TQRVMANVRERQRTQSLNEAFAALRKIIPTLPSDKLSKIQTLKLAARYIDFL. Residues 166 to 196 form a sufficient for transactivation activity region; that stretch reads QVLQSDELDSKMASCSYVAHERLSYAFSVWR.

As to quaternary structure, efficient DNA binding requires dimerization with another bHLH protein. Homodimer or heterodimer with E proteins such as TCF3. ID1 binds preferentially to TCF3 but does not interact efficiently with TWIST1 so ID1 levels control the amount of TCF3 available to dimerize with TWIST and thus determine the type of dimer formed.

The protein resides in the nucleus. Its function is as follows. Acts as a transcriptional regulator. Inhibits myogenesis by sequestrating E proteins, inhibiting trans-activation by MEF2, and inhibiting DNA-binding by MYOD1 through physical interaction. This interaction probably involves the basic domains of both proteins. Also represses expression of pro-inflammatory cytokines such as TNFA and IL1B. Regulates cranial suture patterning and fusion. Activates transcription as a heterodimer with E proteins. Regulates gene expression differentially, depending on dimer composition. Homodimers induce expression of FGFR2 and POSTN while heterodimers repress FGFR2 and POSTN expression and induce THBS1 expression. Heterodimerization is also required for osteoblast differentiation. Represses the activity of the circadian transcriptional activator: NPAS2-BMAL1 heterodimer. The polypeptide is Twist-related protein 1 (TWIST1) (Cebus capucinus (White-faced sapajou)).